The sequence spans 905 residues: Clumping factor B (905 aa).

The signal sequence occupies residues 1 to 44 (MKKRIDYLSNKQNKYSIRRFTVGTTSVIVGATILFGIGNHQAQA). Positions 15 to 26 (YSIRRFTVGTTS) match the YSIRK-G/S signaling motif motif. 2 stretches are compositionally biased toward polar residues: residues 44 to 61 (ASEQ…NASA) and 68 to 101 (MIET…KPMS). Residues 44–191 (ASEQSNDTTQ…AQGTSKPSVR (148 aa)) form a disordered region. The tract at residues 45–542 (SEQSNDTTQS…GSADGDSAVN (498 aa)) is ligand binding A region. The segment covering 102 to 119 (TQTSNTTTTEPASTNETP) has biased composition (low complexity). Polar residues predominate over residues 134-189 (QDQTVPQEANSQVDNKTTNDANSIATNSELKNPQTLDLPQSSPQTISNAQGTSKPS). The MIDAS-like motif signature appears at 272-276 (DYSNS). Residues 530-877 (YGGGSADGDS…ETGDKSENTN (348 aa)) form a disordered region. Positions 545–555 (DPTPGPPVDPE) are enriched in pro residues. The span at 556–829 (PSPDPEPEPS…SDSDSDSDSD (274 aa)) shows a compositional bias: acidic residues. Over residues 833–844 (RVTPPNNEQKAP) the composition is skewed to polar residues. Residues 861 to 874 (HKTDALPETGDKSE) show a composition bias toward basic and acidic residues. An LPXTG sorting signal motif is present at residues 866–870 (LPETG). A Pentaglycyl murein peptidoglycan amidated threonine modification is found at T869. A propeptide spans 870 to 905 (GDKSENTNATLFGAMMALLGSLLLFRKRKQDHKEKA) (removed by sortase).

Belongs to the serine-aspartate repeat-containing protein (SDr) family. Proteolytically cleaved by aureolysin (aur). This cleavage leads to the inactivation of ClfB.

It localises to the secreted. The protein resides in the cell wall. Cell surface-associated protein implicated in virulence by promoting bacterial attachment to both alpha- and beta-chains of human fibrinogen and inducing the formation of bacterial clumps. The sequence is that of Clumping factor B (clfB) from Staphylococcus aureus (strain MSSA476).